Here is a 182-residue protein sequence, read N- to C-terminus: UPF0254 protein MK0012 (182 aa).

Belongs to the UPF0254 family.

The polypeptide is UPF0254 protein MK0012 (Methanopyrus kandleri (strain AV19 / DSM 6324 / JCM 9639 / NBRC 100938)).